The chain runs to 330 residues: Trans-1,2-dihydrobenzene-1,2-diol dehydrogenase (330 aa).

It belongs to the Gfo/Idh/MocA family. In terms of assembly, homodimer.

The catalysed reaction is (1R,2R)-1,2-dihydrobenzene-1,2-diol + NADP(+) = catechol + NADPH + H(+). The enzyme catalyses D-xylose + NADP(+) = D-xylono-1,5-lactone + NADPH + H(+). In Xenopus laevis (African clawed frog), this protein is Trans-1,2-dihydrobenzene-1,2-diol dehydrogenase (dhdh).